Reading from the N-terminus, the 493-residue chain is Vacuolar-processing enzyme (493 aa).

A signal peptide spans 1–19 (MGSSQLSTLLFFTIVVTFL). The N-linked (GlcNAc...) asparagine glycan is linked to N147. H174 is a catalytic residue. The Nucleophile role is filled by C216. Residues C249 and C263 are joined by a disulfide bond. N295 and N331 each carry an N-linked (GlcNAc...) asparagine glycan. 2 disulfides stabilise this stretch: C429/C459 and C441/C476.

The protein belongs to the peptidase C13 family.

Functionally, asparagine-specific endopeptidase involved in the processing of vacuolar seed protein precursors into the mature forms. The sequence is that of Vacuolar-processing enzyme from Vicia sativa (Spring vetch).